The chain runs to 317 residues: DNA-directed RNA polymerase III subunit RPC6 (317 aa).

The protein belongs to the eukaryotic RPC34/RPC39 RNA polymerase subunit family. As to quaternary structure, component of the RNA polymerase III (Pol III) complex consisting of 17 subunits. Interacts with BRF1/TDS4.

The protein resides in the nucleus. Functionally, DNA-dependent RNA polymerase catalyzes the transcription of DNA into RNA using the four ribonucleoside triphosphates as substrates. Specific peripheric component of RNA polymerase III which synthesizes small RNAs, such as 5S rRNA and tRNAs. Involved in recruitment of Pol III to the preinitiation complex. Involved in the configuration of an initiation-competent form of RNA polymerase. This is DNA-directed RNA polymerase III subunit RPC6 (RPC34) from Saccharomyces cerevisiae (strain ATCC 204508 / S288c) (Baker's yeast).